A 179-amino-acid chain; its full sequence is Large ribosomal subunit protein uL5 (179 aa).

Belongs to the universal ribosomal protein uL5 family. Part of the 50S ribosomal subunit; part of the 5S rRNA/L5/L18/L25 subcomplex. Contacts the 5S rRNA and the P site tRNA. Forms a bridge to the 30S subunit in the 70S ribosome.

Functionally, this is one of the proteins that bind and probably mediate the attachment of the 5S RNA into the large ribosomal subunit, where it forms part of the central protuberance. In the 70S ribosome it contacts protein S13 of the 30S subunit (bridge B1b), connecting the 2 subunits; this bridge is implicated in subunit movement. Contacts the P site tRNA; the 5S rRNA and some of its associated proteins might help stabilize positioning of ribosome-bound tRNAs. This is Large ribosomal subunit protein uL5 from Dichelobacter nodosus (strain VCS1703A).